A 179-amino-acid polypeptide reads, in one-letter code: Large ribosomal subunit protein uL5 (179 aa).

The protein belongs to the universal ribosomal protein uL5 family. In terms of assembly, part of the 50S ribosomal subunit; part of the 5S rRNA/L5/L18/L25 subcomplex. Contacts the 5S rRNA and the P site tRNA. Forms a bridge to the 30S subunit in the 70S ribosome.

In terms of biological role, this is one of the proteins that bind and probably mediate the attachment of the 5S RNA into the large ribosomal subunit, where it forms part of the central protuberance. In the 70S ribosome it contacts protein S13 of the 30S subunit (bridge B1b), connecting the 2 subunits; this bridge is implicated in subunit movement. Contacts the P site tRNA; the 5S rRNA and some of its associated proteins might help stabilize positioning of ribosome-bound tRNAs. This chain is Large ribosomal subunit protein uL5, found in Burkholderia mallei (strain NCTC 10247).